Reading from the N-terminus, the 409-residue chain is Isocitrate dehydrogenase [NADP] 1 (409 aa).

NADP(+)-binding residues include lysine 75, threonine 78, threonine 80, and arginine 85. Residues aspartate 255, aspartate 278, and aspartate 282 each coordinate Mn(2+). NADP(+) contacts are provided by glycine 313, threonine 314, valine 315, histidine 318, and asparagine 331.

Belongs to the isocitrate and isopropylmalate dehydrogenases family. In terms of assembly, homodimer. It depends on Mg(2+) as a cofactor. Requires Mn(2+) as cofactor.

It catalyses the reaction D-threo-isocitrate + NADP(+) = 2-oxoglutarate + CO2 + NADPH. Its function is as follows. Catalyzes the oxidative decarboxylation of isocitrate to 2-oxoglutarate and carbon dioxide with the concomitant reduction of NADP(+). The protein is Isocitrate dehydrogenase [NADP] 1 (icd) of Mycobacterium bovis (strain ATCC BAA-935 / AF2122/97).